We begin with the raw amino-acid sequence, 277 residues long: Inositol monophosphatase 1 (277 aa).

Positions 70, 90, 92, and 93 each coordinate Mg(2+). Residue Glu70 participates in substrate binding. Position 92-95 (92-95) interacts with substrate; the sequence is IDGT. Phosphothreonine is present on Thr168. Substrate is bound by residues 194-196, Glu213, and Asp220; that span reads GTA. Residue Asp220 participates in Mg(2+) binding.

This sequence belongs to the inositol monophosphatase superfamily. In terms of assembly, homodimer. Mg(2+) serves as cofactor.

It localises to the cytoplasm. The catalysed reaction is a myo-inositol phosphate + H2O = myo-inositol + phosphate. The enzyme catalyses 1D-myo-inositol 1-phosphate + H2O = myo-inositol + phosphate. It carries out the reaction 1D-myo-inositol 2-phosphate + H2O = myo-inositol + phosphate. It catalyses the reaction 1D-myo-inositol 3-phosphate + H2O = myo-inositol + phosphate. The catalysed reaction is 1D-myo-inositol 4-phosphate + H2O = myo-inositol + phosphate. The enzyme catalyses 1D-myo-inositol 5-phosphate + H2O = myo-inositol + phosphate. It carries out the reaction 1D-myo-inositol 6-phosphate + H2O = myo-inositol + phosphate. It catalyses the reaction scyllo-inositol 1-phosphate + H2O = scyllo-inositol + phosphate. The catalysed reaction is alpha-D-galactose 1-phosphate + H2O = D-galactose + phosphate. The enzyme catalyses alpha-D-glucose 1-phosphate + H2O = D-glucose + phosphate. It carries out the reaction D-glucose 6-phosphate + H2O = D-glucose + phosphate. It catalyses the reaction beta-D-fructose 1-phosphate + H2O = D-fructose + phosphate. The catalysed reaction is glycerol 2-phosphate + H2O = glycerol + phosphate. The enzyme catalyses adenosine 2'-phosphate + H2O = adenosine + phosphate. It participates in polyol metabolism; myo-inositol biosynthesis; myo-inositol from D-glucose 6-phosphate: step 2/2. Inhibited by Li(+), Ca(2+) and Mn(2+), but also by Mg(2+) at concentrations above 3 mM. Phosphatase involved in the dephosphorylation of myo-inositol monophosphate to generate myo-inositol. Is also able to dephosphorylate scyllo-inositol-phosphate, myo-inositol 1,4-diphosphate, scyllo-inositol-1,3-diphosphate and scyllo-inositol-1,4-diphosphate. Also dephosphorylates in vitro other sugar-phosphates including D-galactose-1-phosphate, glucose-1-phosphate, glucose-6-phosphate, fructose-1-phosphate, beta-glycerophosphate and 2'-AMP. Responsible for the provision of inositol required for synthesis of phosphatidylinositol and polyphosphoinositides, and involved in maintaining normal brain function. Has been implicated as the pharmacological target for lithium Li(+) action in brain. The chain is Inositol monophosphatase 1 (IMPA1) from Pongo abelii (Sumatran orangutan).